Reading from the N-terminus, the 527-residue chain is Splicing factor MUD2 (527 aa).

The interval 36 to 169 (DNAVIDTHFK…SKFNGDRDKR (134 aa)) is disordered. Residues 42 to 55 (THFKRQKSDGELPK) are compositionally biased toward basic and acidic residues. A Phosphoserine modification is found at S49. Residues 60 to 85 (RNVSHSNNRGPSSIITMSTNRTTYEQ) show a composition bias toward polar residues. Over residues 94 to 109 (SYRDASGRSYNRENRY) the composition is skewed to basic and acidic residues. The segment covering 110-122 (SSHNTGPQWNNNP) has biased composition (polar residues). 2 stretches are compositionally biased toward basic and acidic residues: residues 125 to 141 (RQRD…DRRG) and 155 to 169 (RKNE…RDKR). The region spanning 424-511 (LLLLNCLDPL…QFNDRTVLCT (88 aa)) is the RRM domain.

MSL5, MUD2 and PRP40 interact to form the commitment complex 2 (CC2), a precursor of mature spliceosomes.

Its function is as follows. Splicing factor that contacts pre-mRNA directly and is a component of the pre-mRNA-U1 snRNP complex (commitment complex 2) that forms during early spliceosome assembly in yeast extracts. This Saccharomyces cerevisiae (strain ATCC 204508 / S288c) (Baker's yeast) protein is Splicing factor MUD2 (MUD2).